Reading from the N-terminus, the 156-residue chain is MSRRHAAEKREITPDAKFHDYVVAKFMNCLMLDGKKSAAEAIVYGALDKIQAKTGQDPLKVFHEALDNVKPALEVRSRRVGGATYQVPVEVRSDRRQALAIRWLIDYSRKRSETTMIDRLSGELLDAANNRGAAVKKREDTHRMAEANKAFSHYRW.

The protein belongs to the universal ribosomal protein uS7 family. Part of the 30S ribosomal subunit. Contacts proteins S9 and S11.

Its function is as follows. One of the primary rRNA binding proteins, it binds directly to 16S rRNA where it nucleates assembly of the head domain of the 30S subunit. Is located at the subunit interface close to the decoding center, probably blocks exit of the E-site tRNA. This is Small ribosomal subunit protein uS7 from Paramagnetospirillum magneticum (strain ATCC 700264 / AMB-1) (Magnetospirillum magneticum).